A 534-amino-acid polypeptide reads, in one-letter code: Ulvan lyase NLR42 (534 aa).

The first 47 residues, 1–47 (MVFFKDLFIFKSLIKGSLYSGHMKKKLLNYLPLFALMLFTVSMMAQT), serve as a signal peptide directing secretion. Cys-59 and Cys-89 are joined by a disulfide. Positions 63, 68, 86, 88, 91, and 92 each coordinate Ca(2+). Position 164 (Tyr-164) interacts with substrate. The Proton acceptor role is filled by Lys-169. Substrate is bound by residues 218–223 (SGAAGR) and 288–291 (YRVK). Tyr-288 serves as the catalytic Proton donor/acceptor. The interval 316–449 (PAADIYRIKN…SKWNLESTTL (134 aa)) is ulvan-binding domain. A propeptide spans 450 to 534 (SVDSQQIASV…KVYQTKLIVN (85 aa)) (removed by the type IX secretion system (T9SS)).

It belongs to the polysaccharide lyase 28 family. The cofactor is Ca(2+).

It localises to the secreted. Ulvan lyase involved in ulvan degradation. Ulvan is the main polysaccharide component of the Ulvales (green seaweed) cell wall. It is composed of disaccharide building blocks comprising 3-sulfated rhamnose (Rha3S) linked to D-glucuronic acid (GlcA), L-iduronic acid (IduA), or D-xylose (Xyl). Ulvan lyase catalyzes the endolytic cleavage of the glycosidic bond between Rha3S and the uronic acids GlcA or IduA, producing oligosaccharides that have unsaturated 4-deoxy-L-threo-hex-4-enopyranosiduronic acid (deltaUA) at the non-reducing end. This results eventually in the degradation of the ulvan polysaccharide into deltaUA-Rha3S disaccharides and deltaUA-Rha3S-Xyl-Rha3S tetrasaccharides. The protein is Ulvan lyase NLR42 of Nonlabens ulvanivorans (Persicivirga ulvanivorans).